Reading from the N-terminus, the 522-residue chain is Putative ribose/galactose/methyl galactoside import ATP-binding protein (522 aa).

ABC transporter domains are found at residues Leu-7–Glu-244 and Pro-254–Ala-498. Gly-39–Ser-46 serves as a coordination point for ATP.

The protein belongs to the ABC transporter superfamily. Carbohydrate importer 2 (CUT2) (TC 3.A.1.2) family.

The protein localises to the cell membrane. The enzyme catalyses D-ribose(out) + ATP + H2O = D-ribose(in) + ADP + phosphate + H(+). It carries out the reaction D-galactose(out) + ATP + H2O = D-galactose(in) + ADP + phosphate + H(+). Its function is as follows. Part of an ABC transporter complex involved in carbohydrate import. Could be involved in ribose, galactose and/or methyl galactoside import. Responsible for energy coupling to the transport system. This chain is Putative ribose/galactose/methyl galactoside import ATP-binding protein, found in Halalkalibacterium halodurans (strain ATCC BAA-125 / DSM 18197 / FERM 7344 / JCM 9153 / C-125) (Bacillus halodurans).